Consider the following 341-residue polypeptide: Retinol dehydrogenase 10 (341 aa).

The helical; Signal-anchor transmembrane segment at 3-23 threads the bilayer; that stretch reads IVVEFFLVTFKVLWAFVLAAA. NADP(+) is bound at residue 40 to 64; it reads LITGAGSGLGRLFALEFARRRALLV. Ser197 contacts substrate. Catalysis depends on Tyr210, which acts as the Proton acceptor.

It belongs to the short-chain dehydrogenases/reductases (SDR) family. In terms of tissue distribution, detected in retina, entire eyecups and in liver (at protein level).

It localises to the microsome membrane. It is found in the endoplasmic reticulum membrane. The enzyme catalyses all-trans-retinol + NADP(+) = all-trans-retinal + NADPH + H(+). It participates in cofactor metabolism; retinol metabolism. Functionally, retinol dehydrogenase with a clear preference for NADP. Converts all-trans-retinol to all-trans-retinal. The sequence is that of Retinol dehydrogenase 10 (Rdh10) from Rattus norvegicus (Rat).